The following is a 196-amino-acid chain: Histone H1.0 (196 aa).

2 disordered regions span residues 1–29 and 78–196; these read MTENSAAAPAGKPKRSKASKKATDHPKYS and SGTL…GRKK. The H15 domain maps to 24–97; the sequence is DHPKYSDMIL…GASGSFRLAK (74 aa). Basic residues predominate over residues 104–196; that stretch reads PAKKPKKEIK…ASPKKSGRKK (93 aa).

The protein belongs to the histone H1/H5 family.

The protein resides in the nucleus. It localises to the chromosome. Functionally, histones H1 are necessary for the condensation of nucleosome chains into higher-order structures. The histones H1.0 are found in cells that are in terminal stages of differentiation or that have low rates of cell division. The polypeptide is Histone H1.0 (h1-0) (Xenopus tropicalis (Western clawed frog)).